The following is a 335-amino-acid chain: Phosphate acyltransferase (335 aa).

It belongs to the PlsX family. In terms of assembly, homodimer. Probably interacts with PlsY.

Its subcellular location is the cytoplasm. It carries out the reaction a fatty acyl-[ACP] + phosphate = an acyl phosphate + holo-[ACP]. It functions in the pathway lipid metabolism; phospholipid metabolism. In terms of biological role, catalyzes the reversible formation of acyl-phosphate (acyl-PO(4)) from acyl-[acyl-carrier-protein] (acyl-ACP). This enzyme utilizes acyl-ACP as fatty acyl donor, but not acyl-CoA. This is Phosphate acyltransferase from Desulfitobacterium hafniense (strain Y51).